A 128-amino-acid chain; its full sequence is Azurin (128 aa).

The Plastocyanin-like domain maps to 1–128 (AECKVDVDST…SMMKGAVVLK (128 aa)). A disulfide bridge connects residues C3 and C26. Residues H46, C112, H117, and M121 each coordinate Cu cation.

It is found in the periplasm. Transfers electrons from cytochrome c551 to cytochrome oxidase. This Pseudomonas chlororaphis (Pseudomonas aureofaciens) protein is Azurin.